The following is a 301-amino-acid chain: Glycine--tRNA ligase alpha subunit (301 aa).

Belongs to the class-II aminoacyl-tRNA synthetase family. As to quaternary structure, tetramer of two alpha and two beta subunits.

It localises to the cytoplasm. It catalyses the reaction tRNA(Gly) + glycine + ATP = glycyl-tRNA(Gly) + AMP + diphosphate. The protein is Glycine--tRNA ligase alpha subunit of Shewanella oneidensis (strain ATCC 700550 / JCM 31522 / CIP 106686 / LMG 19005 / NCIMB 14063 / MR-1).